The following is a 195-amino-acid chain: Imidazoleglycerol-phosphate dehydratase (195 aa).

It belongs to the imidazoleglycerol-phosphate dehydratase family.

The protein resides in the cytoplasm. The enzyme catalyses D-erythro-1-(imidazol-4-yl)glycerol 3-phosphate = 3-(imidazol-4-yl)-2-oxopropyl phosphate + H2O. It participates in amino-acid biosynthesis; L-histidine biosynthesis; L-histidine from 5-phospho-alpha-D-ribose 1-diphosphate: step 6/9. This is Imidazoleglycerol-phosphate dehydratase from Paraburkholderia phymatum (strain DSM 17167 / CIP 108236 / LMG 21445 / STM815) (Burkholderia phymatum).